Here is a 385-residue protein sequence, read N- to C-terminus: Protein pelota homolog (385 aa).

Residue Lys162 forms a Glycyl lysine isopeptide (Lys-Gly) (interchain with G-Cter in SUMO2) linkage. Phosphoserine is present on residues Ser374, Ser380, Ser381, and Ser382.

Belongs to the eukaryotic release factor 1 family. Pelota subfamily. Component of the Pelota-HBS1L complex, also named Dom34-Hbs1 complex, composed of PELO and HBS1L. Interacts with PINK1. Interacts with ABCE1. Interacts with CNOT4. It depends on a divalent metal cation as a cofactor.

The protein localises to the cytoplasm. In terms of biological role, component of the Pelota-HBS1L complex, a complex that recognizes stalled ribosomes and triggers the No-Go Decay (NGD) pathway. In the Pelota-HBS1L complex, PELO recognizes ribosomes stalled at the 3' end of an mRNA and engages stalled ribosomes by destabilizing mRNA in the mRNA channel. Following mRNA extraction from stalled ribosomes by the SKI complex, the Pelota-HBS1L complex promotes recruitment of ABCE1, which drives the disassembly of stalled ribosomes, followed by degradation of damaged mRNAs as part of the NGD pathway. As part of the PINK1-regulated signaling, upon mitochondrial damage is recruited to the ribosome/mRNA-ribonucleoprotein complex associated to mitochondrial outer membrane thereby enabling the recruitment of autophagy receptors and induction of mitophagy. This Rattus norvegicus (Rat) protein is Protein pelota homolog (Pelo).